The primary structure comprises 4307 residues: Cytoplasmic dynein 2 heavy chain 1 (4307 aa).

The interval 1-1650 is stem; the sequence is MANGTADVRK…CVQMVDSEFQ (1650 aa). 145–152 is an ATP binding site; the sequence is LGIVLRRS. Positions 1074–1103 form a coiled coil; that stretch reads NTLDKSAKLIKEKKIEFDDLEVTRKKLVDD. 4 AAA regions span residues 1651–1875, 1938–2161, 2251–2505, and 2617–2863; these read YTYE…VLRG, ELSA…KQND, ADDF…WVLG, and HYGR…ESCK. Residues 1689–1696, 1979–1986, 2291–2298, and 2655–2662 contribute to the ATP site; these read GPAGTGKT, GPSGAGKS, GPEGCGKG, and GRSGVGRR. The stalk stretch occupies residues 2881–3169; the sequence is AISSSKKKEL…AEVSKAQETI (289 aa). Coiled-coil stretches lie at residues 2897–2982, 3109–3200, and 3408–3442; these read LQAG…KEVQ, LETE…LATL, and IQHE…SLLE. 2 AAA regions span residues 3244-3473 and 3690-3905; these read LCTE…LIQE and MALF…IIDR.

This sequence belongs to the dynein heavy chain family. As to quaternary structure, the cytoplasmic dynein complex 2 is probably composed by a heavy chain DYNC2H1 homodimer and a number of DYNC2LI1 light intermediate chains.

It localises to the cytoplasm. Its subcellular location is the cytoskeleton. The protein localises to the cilium axoneme. It is found in the cell membrane. In terms of biological role, may function as a motor for intraflagellar retrograde transport. Functions in cilia biogenesis. May play a role in transport between endoplasmic reticulum and Golgi or organization of the Golgi in cells. In Homo sapiens (Human), this protein is Cytoplasmic dynein 2 heavy chain 1 (DYNC2H1).